The sequence spans 149 residues: Transcriptional repressor NrdR (149 aa).

The segment at 3–34 is a zinc-finger region; sequence CPFCAAVDTKVIDSRLVGDGSQVRRRRQCLEC. Residues 49–139 form the ATP-cone domain; the sequence is PRVIKSDDIR…VYRSFEDIRE (91 aa).

It belongs to the NrdR family. It depends on Zn(2+) as a cofactor.

Negatively regulates transcription of bacterial ribonucleotide reductase nrd genes and operons by binding to NrdR-boxes. This chain is Transcriptional repressor NrdR, found in Photorhabdus laumondii subsp. laumondii (strain DSM 15139 / CIP 105565 / TT01) (Photorhabdus luminescens subsp. laumondii).